The sequence spans 412 residues: 23S rRNA (uracil(747)-C(5))-methyltransferase (412 aa).

[4Fe-4S] cluster is bound by residues Cys63, Cys69, Cys72, and Cys139. Gln255, Tyr281, Glu302, and Asp343 together coordinate S-adenosyl-L-methionine. The Nucleophile role is filled by Cys369.

It belongs to the class I-like SAM-binding methyltransferase superfamily. RNA M5U methyltransferase family.

It carries out the reaction uridine(747) in 23S rRNA + S-adenosyl-L-methionine = 5-methyluridine(747) in 23S rRNA + S-adenosyl-L-homocysteine + H(+). Functionally, catalyzes the formation of 5-methyl-uridine at position equivalent to 747 (m5U747) in 23S rRNA. The protein is 23S rRNA (uracil(747)-C(5))-methyltransferase of Pyrococcus horikoshii (strain ATCC 700860 / DSM 12428 / JCM 9974 / NBRC 100139 / OT-3).